A 298-amino-acid polypeptide reads, in one-letter code: Glutamyl-Q tRNA(Asp) synthetase (298 aa).

Residues 9–13 and Glu-45 each bind L-glutamate; that span reads RFAPS. The 'HIGH' region signature appears at 12–22; the sequence is PSPSGELHFGS. Residues Cys-101, Cys-103, Tyr-115, and Cys-119 each coordinate Zn(2+). 2 residues coordinate L-glutamate: Tyr-172 and Arg-190. Positions 228 to 232 match the 'KMSKS' region motif; the sequence is KLSKQ. Lys-231 provides a ligand contact to ATP.

It belongs to the class-I aminoacyl-tRNA synthetase family. GluQ subfamily. Zn(2+) serves as cofactor.

Functionally, catalyzes the tRNA-independent activation of glutamate in presence of ATP and the subsequent transfer of glutamate onto a tRNA(Asp). Glutamate is transferred on the 2-amino-5-(4,5-dihydroxy-2-cyclopenten-1-yl) moiety of the queuosine in the wobble position of the QUC anticodon. The chain is Glutamyl-Q tRNA(Asp) synthetase from Salmonella typhimurium (strain LT2 / SGSC1412 / ATCC 700720).